The chain runs to 126 residues: Aspartate 1-decarboxylase (126 aa).

S25 serves as the catalytic Schiff-base intermediate with substrate; via pyruvic acid. S25 is modified (pyruvic acid (Ser)). T57 lines the substrate pocket. The Proton donor role is filled by Y58. 73–75 (GAA) serves as a coordination point for substrate.

It belongs to the PanD family. In terms of assembly, heterooctamer of four alpha and four beta subunits. Requires pyruvate as cofactor. Post-translationally, is synthesized initially as an inactive proenzyme, which is activated by self-cleavage at a specific serine bond to produce a beta-subunit with a hydroxyl group at its C-terminus and an alpha-subunit with a pyruvoyl group at its N-terminus.

The protein resides in the cytoplasm. The catalysed reaction is L-aspartate + H(+) = beta-alanine + CO2. It functions in the pathway cofactor biosynthesis; (R)-pantothenate biosynthesis; beta-alanine from L-aspartate: step 1/1. In terms of biological role, catalyzes the pyruvoyl-dependent decarboxylation of aspartate to produce beta-alanine. This chain is Aspartate 1-decarboxylase, found in Citrobacter koseri (strain ATCC BAA-895 / CDC 4225-83 / SGSC4696).